The following is a 48-amino-acid chain: Protein YgdT (48 aa).

The chain is Protein YgdT (ygdT) from Escherichia coli (strain K12).